The chain runs to 864 residues: Coiled-coil and C2 domain-containing protein 1B (864 aa).

Residues 82–154 form a disordered region; sequence QDCMTDMTGE…VNSSVAEIQH (73 aa). Acidic residues-rich tracts occupy residues 89 to 104 and 111 to 129; these read TGEDDDDDLEEDEELL and VGEEEEVEQSQPSDTEESE. A coiled-coil region spans residues 91-118; sequence EDDDDDLEEDEELLAELQDVVGEEEEVE. Residues 142–154 show a composition bias toward polar residues; that stretch reads EQQVNSSVAEIQH. Positions 162–209 form a coiled coil; the sequence is GMLQVLEERIGNYKEAISNAKLSNESAKARRYERGLKTLESMLSAARQ. Residues 218 to 249 are disordered; the sequence is IPPPVACGKPAVSPTTDVPTTDTSKQGLGDLN. A compositionally biased stretch (low complexity) spans 229 to 241; sequence VSPTTDVPTTDTS. A coiled-coil region spans residues 385 to 412; that stretch reads VGSLLQALQQRMEKYKSAAQQAKSSGDD. Disordered stretches follow at residues 441-463 and 478-502; these read AELPVPPGFPPLPGMEQTEEEGS and AGEDVDDDEDECQAKPPGHPKPTQL. The span at 444 to 453 shows a compositional bias: pro residues; sequence PVPPGFPPLP. 2 coiled-coil regions span residues 464–488 and 535–564; these read VEKALEAAQKLAKTAGEDVDDDEDE and PAVQEQLEFLEHRKKQYRKAALQAKQKNDL. A C2 domain is found at 685–820; that stretch reads HFEDKTLKIV…ETQCEIREIV (136 aa).

It belongs to the CC2D1 family.

The chain is Coiled-coil and C2 domain-containing protein 1B (cc2d1b) from Xenopus laevis (African clawed frog).